We begin with the raw amino-acid sequence, 270 residues long: Small ribosomal subunit protein uS2 (270 aa).

The protein belongs to the universal ribosomal protein uS2 family. In terms of assembly, component of the small ribosomal subunit. Mature ribosomes consist of a small (40S) and a large (60S) subunit. The 40S subunit contains about 33 different proteins and 1 molecule of RNA (18S). The 60S subunit contains about 49 different proteins and 3 molecules of RNA (28S, 5.8S and 5S). Interacts with oho23B/rpS21.

It is found in the cytoplasm. The protein localises to the nucleus. In terms of biological role, required for the assembly and/or stability of the 40S ribosomal subunit. Required for the processing of the 20S rRNA-precursor to mature 18S rRNA in a late step of the maturation of 40S ribosomal subunits. Required during oogenesis and imaginal development. The polypeptide is Small ribosomal subunit protein uS2 (Drosophila persimilis (Fruit fly)).